The primary structure comprises 177 residues: Peptide deformylase 2 (177 aa).

Residues cysteine 99 and histidine 141 each contribute to the Fe cation site. Residue glutamate 142 is part of the active site. Residue histidine 145 participates in Fe cation binding.

It belongs to the polypeptide deformylase family. Fe(2+) serves as cofactor.

It carries out the reaction N-terminal N-formyl-L-methionyl-[peptide] + H2O = N-terminal L-methionyl-[peptide] + formate. In terms of biological role, removes the formyl group from the N-terminal Met of newly synthesized proteins. Requires at least a dipeptide for an efficient rate of reaction. N-terminal L-methionine is a prerequisite for activity but the enzyme has broad specificity at other positions. The protein is Peptide deformylase 2 of Ralstonia nicotianae (strain ATCC BAA-1114 / GMI1000) (Ralstonia solanacearum).